Here is a 1212-residue protein sequence, read N- to C-terminus: Nucleolar protein 6 (1212 aa).

Disordered stretches follow at residues 1–72 (MGKI…PVSI) and 1156–1212 (KREQ…KSLS). Residues 1197 to 1212 (LKRKSLIKSRPLKSLS) show a composition bias toward basic residues.

The protein belongs to the NRAP family. As to quaternary structure, part of the small subunit (SSU) processome, composed of more than 70 proteins and the RNA chaperone small nucleolar RNA (snoRNA) U3.

It is found in the nucleus. The protein resides in the nucleolus. It localises to the chromosome. In terms of biological role, part of the small subunit (SSU) processome, first precursor of the small eukaryotic ribosomal subunit. During the assembly of the SSU processome in the nucleolus, many ribosome biogenesis factors, an RNA chaperone and ribosomal proteins associate with the nascent pre-rRNA and work in concert to generate RNA folding, modifications, rearrangements and cleavage as well as targeted degradation of pre-ribosomal RNA by the RNA exosome. The sequence is that of Nucleolar protein 6 from Drosophila pseudoobscura pseudoobscura (Fruit fly).